The following is a 979-amino-acid chain: UPF0182 protein Rv0064 (979 aa).

7 helical membrane-spanning segments follow: residues 19-41, 63-85, 114-136, 174-196, 208-230, 261-280, and 285-307; these read LVTA…DIYV, LAIV…LLAY, LFGW…FDWV, WLFV…FGGL, AARV…AYWL, LVLV…AIFL, and IPAM…WPLL. Residues 898–948 are disordered; the sequence is GTGRVATARGGDAASAPPPGAGGPAPPQAVPPPRTTQPPAAPPRGPDVPPA. The segment covering 913-946 has biased composition (pro residues); the sequence is APPPGAGGPAPPQAVPPPRTTQPPAAPPRGPDVP.

It belongs to the UPF0182 family.

It is found in the cell membrane. In Mycobacterium tuberculosis (strain ATCC 25618 / H37Rv), this protein is UPF0182 protein Rv0064.